Consider the following 472-residue polypeptide: ATP synthase subunit beta (472 aa).

An ATP-binding site is contributed by 155–162; that stretch reads GGAGVGKT.

This sequence belongs to the ATPase alpha/beta chains family. F-type ATPases have 2 components, CF(1) - the catalytic core - and CF(0) - the membrane proton channel. CF(1) has five subunits: alpha(3), beta(3), gamma(1), delta(1), epsilon(1). CF(0) has three main subunits: a(1), b(2) and c(9-12). The alpha and beta chains form an alternating ring which encloses part of the gamma chain. CF(1) is attached to CF(0) by a central stalk formed by the gamma and epsilon chains, while a peripheral stalk is formed by the delta and b chains.

Its subcellular location is the cell membrane. The enzyme catalyses ATP + H2O + 4 H(+)(in) = ADP + phosphate + 5 H(+)(out). Functionally, produces ATP from ADP in the presence of a proton gradient across the membrane. The catalytic sites are hosted primarily by the beta subunits. The protein is ATP synthase subunit beta of Fervidobacterium islandicum.